Reading from the N-terminus, the 503-residue chain is ATP synthase subunit alpha (503 aa).

An ATP-binding site is contributed by 170-177 (GDKQTGKT).

It belongs to the ATPase alpha/beta chains family. As to quaternary structure, F-type ATPases have 2 components, CF(1) - the catalytic core - and CF(0) - the membrane proton channel. CF(1) has five subunits: alpha(3), beta(3), gamma(1), delta(1), epsilon(1). CF(0) has three main subunits: a(1), b(2) and c(9-12). The alpha and beta chains form an alternating ring which encloses part of the gamma chain. CF(1) is attached to CF(0) by a central stalk formed by the gamma and epsilon chains, while a peripheral stalk is formed by the delta and b chains.

It localises to the cell inner membrane. The catalysed reaction is ATP + H2O + 4 H(+)(in) = ADP + phosphate + 5 H(+)(out). In terms of biological role, produces ATP from ADP in the presence of a proton gradient across the membrane. The alpha chain is a regulatory subunit. In Helicobacter pylori (strain HPAG1), this protein is ATP synthase subunit alpha.